The sequence spans 137 residues: Putative pre-16S rRNA nuclease (137 aa).

Belongs to the YqgF nuclease family.

The protein resides in the cytoplasm. Could be a nuclease involved in processing of the 5'-end of pre-16S rRNA. The polypeptide is Putative pre-16S rRNA nuclease (Desulforamulus reducens (strain ATCC BAA-1160 / DSM 100696 / MI-1) (Desulfotomaculum reducens)).